The chain runs to 409 residues: TM2 domain-containing protein ZK858.5 (409 aa).

A TM2 domain is found at 8-55 (VKPWIVRIILIVGGLFGAHRLYLKQVPEAFVFFSTLGVLLIGWLYDSF). 6 consecutive transmembrane segments (helical) span residues 10-30 (PWIVRIILIVGGLFGAHRLYL), 37-57 (FVFFSTLGVLLIGWLYDSFMF), 104-124 (VLYGSYIGLATWLACTVTFGW), 127-147 (INLIPFICVVALGITAGIYII), 168-190 (MFIMVRLAQTTVFRAIFLTAIVS), and 209-229 (HFLFWSSLFLMLVCVILLGCS).

The protein belongs to the TM2 family.

It is found in the membrane. The polypeptide is TM2 domain-containing protein ZK858.5 (Caenorhabditis elegans).